A 329-amino-acid chain; its full sequence is Malate dehydrogenase (329 aa).

Gly12–Gly18 lines the NAD(+) pocket. Residues Arg93 and Arg99 each coordinate substrate. Residues Asn106, Gln113, and Thr130 to Asn132 each bind NAD(+). Substrate-binding residues include Asn132 and Arg163. His188 functions as the Proton acceptor in the catalytic mechanism.

This sequence belongs to the LDH/MDH superfamily. MDH type 2 family.

It catalyses the reaction (S)-malate + NAD(+) = oxaloacetate + NADH + H(+). In terms of biological role, catalyzes the reversible oxidation of malate to oxaloacetate. This chain is Malate dehydrogenase, found in Mycobacterium ulcerans (strain Agy99).